The primary structure comprises 151 residues: Putative pre-16S rRNA nuclease (151 aa).

Belongs to the YqgF nuclease family.

Its subcellular location is the cytoplasm. Functionally, could be a nuclease involved in processing of the 5'-end of pre-16S rRNA. The sequence is that of Putative pre-16S rRNA nuclease from Nostoc sp. (strain PCC 7120 / SAG 25.82 / UTEX 2576).